Reading from the N-terminus, the 273-residue chain is Putative pyruvate, phosphate dikinase regulatory protein (273 aa).

Gly-149–Thr-156 serves as a coordination point for ADP.

This sequence belongs to the pyruvate, phosphate/water dikinase regulatory protein family. PDRP subfamily.

It carries out the reaction N(tele)-phospho-L-histidyl/L-threonyl-[pyruvate, phosphate dikinase] + ADP = N(tele)-phospho-L-histidyl/O-phospho-L-threonyl-[pyruvate, phosphate dikinase] + AMP + H(+). The enzyme catalyses N(tele)-phospho-L-histidyl/O-phospho-L-threonyl-[pyruvate, phosphate dikinase] + phosphate + H(+) = N(tele)-phospho-L-histidyl/L-threonyl-[pyruvate, phosphate dikinase] + diphosphate. Bifunctional serine/threonine kinase and phosphorylase involved in the regulation of the pyruvate, phosphate dikinase (PPDK) by catalyzing its phosphorylation/dephosphorylation. The chain is Putative pyruvate, phosphate dikinase regulatory protein from Rickettsia conorii (strain ATCC VR-613 / Malish 7).